The following is a 474-amino-acid chain: 2-succinylbenzoate--CoA ligase (474 aa).

It belongs to the ATP-dependent AMP-binding enzyme family. MenE subfamily.

It carries out the reaction 2-succinylbenzoate + ATP + CoA = 2-succinylbenzoyl-CoA + AMP + diphosphate. Its pathway is quinol/quinone metabolism; 1,4-dihydroxy-2-naphthoate biosynthesis; 1,4-dihydroxy-2-naphthoate from chorismate: step 5/7. It participates in quinol/quinone metabolism; menaquinone biosynthesis. Its function is as follows. Converts 2-succinylbenzoate (OSB) to 2-succinylbenzoyl-CoA (OSB-CoA). The protein is 2-succinylbenzoate--CoA ligase of Staphylococcus epidermidis (strain ATCC 12228 / FDA PCI 1200).